Consider the following 467-residue polypeptide: 3-isopropylmalate dehydratase large subunit (467 aa).

[4Fe-4S] cluster is bound by residues Cys-347, Cys-408, and Cys-411.

This sequence belongs to the aconitase/IPM isomerase family. LeuC type 1 subfamily. Heterodimer of LeuC and LeuD. Requires [4Fe-4S] cluster as cofactor.

It catalyses the reaction (2R,3S)-3-isopropylmalate = (2S)-2-isopropylmalate. The protein operates within amino-acid biosynthesis; L-leucine biosynthesis; L-leucine from 3-methyl-2-oxobutanoate: step 2/4. In terms of biological role, catalyzes the isomerization between 2-isopropylmalate and 3-isopropylmalate, via the formation of 2-isopropylmaleate. The chain is 3-isopropylmalate dehydratase large subunit from Bordetella bronchiseptica (strain ATCC BAA-588 / NCTC 13252 / RB50) (Alcaligenes bronchisepticus).